The following is a 91-amino-acid chain: Molybdopterin synthase sulfur carrier subunit (91 aa).

Residue glycine 91 is modified to 1-thioglycine; alternate. Glycyl adenylate; alternate is present on glycine 91.

This sequence belongs to the MoaD family. MOCS2A subfamily. As to quaternary structure, heterotetramer; composed of 2 small (MOCS2A) and 2 large (MOCS2B) subunits. C-terminal thiocarboxylation occurs in 2 steps, it is first acyl-adenylated (-COAMP) via the hesA/moeB/thiF part of uba4, then thiocarboxylated (-COSH) via the rhodanese domain of uba4.

It localises to the cytoplasm. The protein operates within cofactor biosynthesis; molybdopterin biosynthesis. Its function is as follows. Acts as a sulfur carrier required for molybdopterin biosynthesis. Component of the molybdopterin synthase complex that catalyzes the conversion of precursor Z into molybdopterin by mediating the incorporation of 2 sulfur atoms into precursor Z to generate a dithiolene group. In the complex, serves as sulfur donor by being thiocarboxylated (-COSH) at its C-terminus by uba4. After interaction with MOCS2B, the sulfur is then transferred to precursor Z to form molybdopterin. The chain is Molybdopterin synthase sulfur carrier subunit from Emericella nidulans (strain FGSC A4 / ATCC 38163 / CBS 112.46 / NRRL 194 / M139) (Aspergillus nidulans).